The following is a 701-amino-acid chain: Elongation factor G (701 aa).

Residues 11–287 (TKVRNIGIMA…AVIDYLPSPL (277 aa)) enclose the tr-type G domain. Residues 20–27 (AHIDAGKT), 84–88 (DTPGH), and 138–141 (NKMD) contribute to the GTP site.

It belongs to the TRAFAC class translation factor GTPase superfamily. Classic translation factor GTPase family. EF-G/EF-2 subfamily.

Its subcellular location is the cytoplasm. In terms of biological role, catalyzes the GTP-dependent ribosomal translocation step during translation elongation. During this step, the ribosome changes from the pre-translocational (PRE) to the post-translocational (POST) state as the newly formed A-site-bound peptidyl-tRNA and P-site-bound deacylated tRNA move to the P and E sites, respectively. Catalyzes the coordinated movement of the two tRNA molecules, the mRNA and conformational changes in the ribosome. The sequence is that of Elongation factor G from Mycobacterium ulcerans (strain Agy99).